We begin with the raw amino-acid sequence, 385 residues long: Ribosomal RNA large subunit methyltransferase G (385 aa).

This sequence belongs to the methyltransferase superfamily. RlmG family.

Its subcellular location is the cytoplasm. It carries out the reaction guanosine(1835) in 23S rRNA + S-adenosyl-L-methionine = N(2)-methylguanosine(1835) in 23S rRNA + S-adenosyl-L-homocysteine + H(+). Its function is as follows. Specifically methylates the guanine in position 1835 (m2G1835) of 23S rRNA. In Vibrio campbellii (strain ATCC BAA-1116), this protein is Ribosomal RNA large subunit methyltransferase G.